The following is a 593-amino-acid chain: Efflux pump FUBT (593 aa).

A disordered region spans residues methionine 1 to valine 44. Polar residues predominate over residues serine 9–glutamate 30. Residue asparagine 19 is glycosylated (N-linked (GlcNAc...) asparagine). The next 12 helical transmembrane spans lie at tryptophan 98–tyrosine 118, valine 135–alanine 155, phenylalanine 167–isoleucine 187, phenylalanine 195–methionine 215, methionine 227–glycine 247, tryptophan 254–isoleucine 274, isoleucine 337–phenylalanine 357, isoleucine 367–alanine 387, leucine 410–threonine 430, isoleucine 438–leucine 458, isoleucine 468–phenylalanine 488, and tryptophan 503–tyrosine 523. Residues threonine 570–valine 593 are disordered.

Belongs to the major facilitator superfamily. DHA1 family. Polyamines/proton antiporter (TC 2.A.1.2.16) subfamily.

Its subcellular location is the cell membrane. Efflux pump involved in export of fusaric acid, a mycotoxin with low to moderate toxicity to animals and humans, but with high phytotoxic properties. Constitutes a self-protecting mechanism of the fungus against critical levels of FSA within the cell. The chain is Efflux pump FUBT from Fusarium oxysporum (Fusarium vascular wilt).